A 1145-amino-acid chain; its full sequence is Error-prone DNA polymerase (1145 aa).

The protein belongs to the DNA polymerase type-C family. DnaE2 subfamily.

It localises to the cytoplasm. The catalysed reaction is DNA(n) + a 2'-deoxyribonucleoside 5'-triphosphate = DNA(n+1) + diphosphate. DNA polymerase involved in damage-induced mutagenesis and translesion synthesis (TLS). It is not the major replicative DNA polymerase. In Rhodopirellula baltica (strain DSM 10527 / NCIMB 13988 / SH1), this protein is Error-prone DNA polymerase.